The sequence spans 171 residues: Large ribosomal subunit protein uL10 (171 aa).

The protein belongs to the universal ribosomal protein uL10 family. In terms of assembly, part of the ribosomal stalk of the 50S ribosomal subunit. The N-terminus interacts with L11 and the large rRNA to form the base of the stalk. The C-terminus forms an elongated spine to which L12 dimers bind in a sequential fashion forming a multimeric L10(L12)X complex.

Functionally, forms part of the ribosomal stalk, playing a central role in the interaction of the ribosome with GTP-bound translation factors. The protein is Large ribosomal subunit protein uL10 of Corynebacterium glutamicum (strain ATCC 13032 / DSM 20300 / JCM 1318 / BCRC 11384 / CCUG 27702 / LMG 3730 / NBRC 12168 / NCIMB 10025 / NRRL B-2784 / 534).